The chain runs to 143 residues: HTH-type transcriptional regulator CueR (143 aa).

The 69-residue stretch at 11-79 folds into the HTH merR-type domain; the sequence is TYRISELAAL…LSDIKDRLEN (69 aa). The segment at residues 14-33 is a DNA-binding region (H-T-H motif); the sequence is ISELAALAGVTKRTVDYYTN.

Its function is as follows. Transcriptional activator of the copZA operon. This chain is HTH-type transcriptional regulator CueR (cueR), found in Bacillus subtilis (strain 168).